A 66-amino-acid polypeptide reads, in one-letter code: LKCVNLQANGIKMTQECAKEDNKCLTLRSLKKTLKFCASDRICKTMKIMSLPGEKITCCEGNMCNA.

4 cysteine pairs are disulfide-bonded: Cys3/Cys24, Cys17/Cys37, Cys43/Cys58, and Cys59/Cys64.

Expressed by the skin dorsal glands.

The protein localises to the secreted. Lacks alpha-neurotoxic activity, has apparently no antibacterial activity, nor anti-coagulant potency. This Xenopus laevis (African clawed frog) protein is Xenoxin-2.